The primary structure comprises 593 residues: Proline--tRNA ligase (593 aa).

The protein belongs to the class-II aminoacyl-tRNA synthetase family. ProS type 1 subfamily. Homodimer.

The protein resides in the cytoplasm. It carries out the reaction tRNA(Pro) + L-proline + ATP = L-prolyl-tRNA(Pro) + AMP + diphosphate. Catalyzes the attachment of proline to tRNA(Pro) in a two-step reaction: proline is first activated by ATP to form Pro-AMP and then transferred to the acceptor end of tRNA(Pro). As ProRS can inadvertently accommodate and process non-cognate amino acids such as alanine and cysteine, to avoid such errors it has two additional distinct editing activities against alanine. One activity is designated as 'pretransfer' editing and involves the tRNA(Pro)-independent hydrolysis of activated Ala-AMP. The other activity is designated 'posttransfer' editing and involves deacylation of mischarged Ala-tRNA(Pro). The misacylated Cys-tRNA(Pro) is not edited by ProRS. The sequence is that of Proline--tRNA ligase from Parasynechococcus marenigrum (strain WH8102).